A 332-amino-acid polypeptide reads, in one-letter code: Melanocortin receptor 4 (332 aa).

Residues M1–Q43 lie on the Extracellular side of the membrane. Residues N2, N17, and N26 are each glycosylated (N-linked (GlcNAc...) asparagine). Intrachain disulfides connect C40-C279 and C271-C277. A helical membrane pass occupies residues L44 to I69. Residues A70–F81 are Cytoplasmic-facing. The helical transmembrane segment at F82–L106 threads the bilayer. Ca(2+) is bound by residues E100, D122, and D126. At L107–N123 the chain is on the extracellular side. The chain crosses the membrane as a helical span at residues V124–V145. Topologically, residues D146–R165 are cytoplasmic. A helical transmembrane segment spans residues V166–I186. At Y187 to S191 the chain is on the extracellular side. The chain crosses the membrane as a helical span at residues A192 to M215. At F216–T248 the chain is on the cytoplasmic side. Residues I249 to C271 form a helical membrane-spanning segment. The Extracellular portion of the chain corresponds to P272 to F280. A helical transmembrane segment spans residues M281 to L304. Topologically, residues R305 to Y332 are cytoplasmic. C318 carries the S-palmitoyl cysteine lipid modification.

The protein belongs to the G-protein coupled receptor 1 family. As to quaternary structure, homodimer; disulfide-linked, also forms higher order oligomers. Interacts with GNAS. Interacts with ATRNL1. Interacts with MGRN1; this interaction competes with GNAS-binding and thus inhibits agonist-induced cAMP production. Interacts with MRAP and MRAP2; these associated factors increase ligand-sensitivity and generation of cAMP. In terms of tissue distribution, brain, enriched in the striatum, nucleus accumbens, and periaqueductal gray.

It localises to the cell membrane. Functionally, hormone receptor that acts as a key component of the leptin-melanocortin pathway at the intersection of homeostatic maintenance of energetic state. Plays a role in regulating food intake: activation by a stimulating hormone such as anorexigenic alpha-melanocyte stimulating hormone (alpha-MSH) inhibits appetite, whereas binding to a natural antagonist like Agouti-related protein/AGRP promotes appetite. G-protein-coupled receptor that activates conventional Galphas signaling leading to induction of anorexogenic signaling in the hypothalamus to result in negative energy balance. Regulates the firing activity of neurons from the hypothalamus by alpha-MSH and AGRP independently of Galphas signaling by ligand-induced coupling of closure of inwardly rectifying potassium channel KCNJ13. In intestinal epithelial cells, plays a role in the inhibition of hepatic glucose production via nesfatin-1/NUCB2 leading to increased cyclic adenosine monophosphate (cAMP) levels and glucagon-like peptide 1 (GLP-1) secretion in the intestinal epithelium. The polypeptide is Melanocortin receptor 4 (Mc4r) (Rattus norvegicus (Rat)).